The primary structure comprises 781 residues: Cadherin-24 (781 aa).

An N-terminal signal peptide occupies residues 1-22 (MWGLVRLLLAWLGGWGCMGRLA). Residues 23 to 44 (APVPAWAGSRGHSGPTLLRTRR) constitute a propeptide that is removed on maturation. Over 45–603 (SWVWNQFFVI…LSPTGLSTGA (559 aa)) the chain is Extracellular. Cadherin domains follow at residues 46-150 (WVWN…PPVF), 151-259 (PLGP…PPKF), 260-374 (PQSL…PPAF), 375-479 (TQAT…APQL), and 479-592 (LAEP…WPEA). 3 N-linked (GlcNAc...) asparagine glycosylation sites follow: Asn-446, Asn-510, and Asn-525. Residues 604 to 624 (LLAIVTCMGTLLALVVLFVAL) form a helical membrane-spanning segment. Residues 625-781 (RRQKQEALMV…LYGAKEPPAP (157 aa)) are Cytoplasmic-facing. 2 disordered regions span residues 665-700 (LQNP…PGPA) and 731-762 (EGRG…LDDW). Residues 733 to 746 (RGSSCGSLSSLGSG) show a composition bias toward low complexity.

As to quaternary structure, associates with alpha-, beta- and delta-catenins.

It is found in the cell membrane. Its function is as follows. Cadherins are calcium-dependent cell adhesion proteins. They preferentially interact with themselves in a homophilic manner in connecting cells; cadherins may thus contribute to the sorting of heterogeneous cell types. Cadherin-24 mediate strong cell-cell adhesion. The polypeptide is Cadherin-24 (Cdh24) (Mus musculus (Mouse)).